A 373-amino-acid polypeptide reads, in one-letter code: MTDNSKIRVVVGMSGGVDSSVTALLLKEQGYDVIGVFMKNWDDTDEFGVCTATEDYKDVAAVADQIGIPYYSVNFEKEYWDRVFEYFLAEYRAGRTPNPDVMCNKEIKFKAFLDYAMTLGADYVATGHYAQVKRDENGTVHMLRGADNGKDQTYFLSQLSQEQLQKTLFPLGHLQKSEVREIAERAGLATAKKKDSTGICFIGEKNFKQFLSQYLPAQKGRMMTIDGRDMGEHAGLMYYTIGQRGGLGIGGQHGGDNQPWFVVGKDLSQNILYVGQGFYHEALMSNSLDASVIHFTREMPEEFTFECTAKFRYRQPDSQVTVHVRGDKAEVVFAEPQRAITPGQAVVFYDGKECLGGGMIDMAYKNGQPCQYI.

Residues 12 to 19 (GMSGGVDS) and Met-38 contribute to the ATP site. Positions 98-100 (NPD) are interaction with target base in tRNA. Cys-103 (nucleophile) is an active-site residue. An intrachain disulfide couples Cys-103 to Cys-200. An ATP-binding site is contributed by Gly-127. The interaction with tRNA stretch occupies residues 150–152 (KDQ). Cys-200 serves as the catalytic Cysteine persulfide intermediate. The interaction with tRNA stretch occupies residues 312 to 313 (RY).

This sequence belongs to the MnmA/TRMU family.

It is found in the cytoplasm. It carries out the reaction S-sulfanyl-L-cysteinyl-[protein] + uridine(34) in tRNA + AH2 + ATP = 2-thiouridine(34) in tRNA + L-cysteinyl-[protein] + A + AMP + diphosphate + H(+). Functionally, catalyzes the 2-thiolation of uridine at the wobble position (U34) of tRNA, leading to the formation of s(2)U34. In Streptococcus pyogenes serotype M6 (strain ATCC BAA-946 / MGAS10394), this protein is tRNA-specific 2-thiouridylase MnmA.